A 251-amino-acid polypeptide reads, in one-letter code: Cathelicidin-B1 (251 aa).

An N-terminal signal peptide occupies residues 1 to 20 (MGRMWASEVLLLLLLGSSRA). Positions 21–211 (VTPGLDVSTA…ELRCRPLRPQ (191 aa)) are excised as a propeptide. The disordered stretch occupies residues 29-109 (TAPGLDGSIP…TITPKQDGSI (81 aa)). Disulfide bonds link Cys172/Cys181 and Cys189/Cys205.

The protein belongs to the cathelicidin family. As to expression, detected in bursa of Fabricius, in filamentous structures surrounding the basal and lateral surfaces of bursal M cells (at protein level). Detected in bursa of Fabricius, in secretory enterocytes of the interfollicular bursal epithelium, but not in M cells.

The protein localises to the secreted. Functionally, has potent antimicrobial activity against Gram-positive and Gram-negative bacteria (in vitro). May play a role in the innate immune response. In Gallus gallus (Chicken), this protein is Cathelicidin-B1 (CATHB1).